Consider the following 173-residue polypeptide: dCTP deaminase, dUMP-forming (173 aa).

DCTP-binding positions include 93–98 (RSSTGR), aspartate 111, 119–121 (TLE), glutamine 138, and tyrosine 151. Catalysis depends on glutamate 121, which acts as the Proton donor/acceptor.

This sequence belongs to the dCTP deaminase family. In terms of assembly, homotrimer.

It catalyses the reaction dCTP + 2 H2O = dUMP + NH4(+) + diphosphate. Its pathway is pyrimidine metabolism; dUMP biosynthesis; dUMP from dCTP: step 1/1. Functionally, bifunctional enzyme that catalyzes both the deamination of dCTP to dUTP and the hydrolysis of dUTP to dUMP without releasing the toxic dUTP intermediate. The chain is dCTP deaminase, dUMP-forming from Clostridium botulinum (strain Eklund 17B / Type B).